The sequence spans 134 residues: Replication enhancer protein (134 aa).

Belongs to the geminiviridae replication enhancer protein family. In terms of assembly, homooligomer. Interacts with the replication-associated protein (REP). Interacts with host proliferating cell nuclear antigen (PCNA). Interacts with host retinoblastoma-related protein 1 (RBR1), and may thereby deregulate the host cell cycle. Oligomerization and interaction with PCNA are necessary for optimal replication enhancement.

Functionally, increases viral DNA accumulation. Enhances infectivity and symptom expression. This is Replication enhancer protein from Nicotiana tabacum (Common tobacco).